The primary structure comprises 152 residues: MIYYVIALFVIAIDQISKWLIVKNMELGTSIPIIDNVLYITSHRNRGAAWGILENKMWFFYIITVVFVAFIVFYMKKYAKTDKLLGISLGLILGGAIGNFIDRVFRQEVVDFIHVYIFSYNYPVFNIADSALCIGVVLIIIQTLLEGKKTKE.

2 helical membrane-spanning segments follow: residues 55-75 (NKMW…VFYM) and 85-105 (LGIS…DRVF). Catalysis depends on residues Asp-111 and Asp-129. A helical membrane pass occupies residues 124–144 (VFNIADSALCIGVVLIIIQTL).

Belongs to the peptidase A8 family.

The protein localises to the cell membrane. The enzyme catalyses Release of signal peptides from bacterial membrane prolipoproteins. Hydrolyzes -Xaa-Yaa-Zaa-|-(S,diacylglyceryl)Cys-, in which Xaa is hydrophobic (preferably Leu), and Yaa (Ala or Ser) and Zaa (Gly or Ala) have small, neutral side chains.. It participates in protein modification; lipoprotein biosynthesis (signal peptide cleavage). Its function is as follows. This protein specifically catalyzes the removal of signal peptides from prolipoproteins. The chain is Lipoprotein signal peptidase from Bacillus cereus (strain AH187).